Consider the following 431-residue polypeptide: FAD-dependent monooxygenase nodY1 (431 aa).

Positions 1–21 (MASTGVSVIVVGLGLAGLTTA) are cleaved as a signal peptide. Positions 35 and 110 each coordinate FAD. R188 is a catalytic residue. An FAD-binding site is contributed by D313.

Belongs to the paxM FAD-dependent monooxygenase family. Requires FAD as cofactor.

The protein operates within secondary metabolite biosynthesis. Its function is as follows. FAD-dependent monooxygenase; part of the gene cluster that mediates the biosynthesis of the indole diterpenes nodulisporic acids (NA). Nodulisporic acid A (NAA) and its chemically modified derivatives are of particular significance because of their highly potent insecticidal activity against blood-feeding arthropods and lack of observable adverse effects on mammals, in particular the tremogenicity associated with the paspaline-derived IDTs is not observed. The geranylgeranyl diphosphate (GGPP) synthase ggs1, localized outside of the cluster, is proposed to catalyze the first step in nodulisporic acid biosynthesis via conversion of farnesyl pyrophosphate and isopentyl pyrophosphate into geranylgeranyl pyrophosphate (GGPP). Condensation of indole-3-glycerol phosphate with GGPP by the prenyl transferase nodC then forms 3-geranylgeranylindole (3-GGI). Epoxidation by the FAD-dependent monooxygenase nodM leads to a single-epoxidized-GGI that is substrate of the terpene cyclase nodB for cyclization to yield emindole SB. The terminal methyl carbon, C28, of emindole SB is then oxidized by the cytochrome P450 monooxygenase nodW to produce nodulisporic acid F (NAF), the pentacyclic core of NAA. NAF is converted to nodulisporic acid E (NAE) via prenylation. This step is probably performed by one of the indole diterpene prenyltransferases nodD1 or nodD2. Several oxidation steps performed by the FAD-linked oxidoreductase nodO and one of the cytochrome P450 monooxygenase nodR, nodX or nodZ further convert NAE to nodulisporic acid D (NAD). NAD is substrate of cytochrome P450 monooxygenase nodJ to produce the precursor of nodulisporic acid C (NAC), converted to NAC by one of the indole diterpene prenyltransferases nodD1 or nodD2. The FAD-dependent monooxygenase nodY2 then oxidizes NAC to nodulisporic acid B (NAB). Finally NAB is converted to NAA by one of the cytochrome P450 monooxygenases nodR, nodX or nodZ. This Hypoxylon pulicicidum protein is FAD-dependent monooxygenase nodY1.